The following is a 401-amino-acid chain: MLFLKAVIAILSVLPAADAAAILNFENKQGIIPDSYIVVLKNDISSDDFKSHVAWATGVHNANVAKRDVPLAGMQRTFEMDIFKGYSGAFDRATLDDLLKNEQVDYIEPDRMASAQGWTTQGNAPSWGLGRISHQQRGNTDYVFDSTAGRGITIYGVDSGIDILHAEFGGRATWGANFFNNINTDEFGHGTHTAATFGGTNYGVAKNVNIVAVKVLGDQGQGPWSSIIDGLQWAVNDAREKGILGKAIINFSVGGPSSRAADNALTAAHNAGVFVSAAAGNDGADALNYTPGTARSICVIGNINENDYRFTGNGASNWGTRIDLWAPGTDILSALPQGRYGPMTGTSMAAPHVAGSVAILMASGGVSTAEACGVLKDMSTPSVIEPGQGSTNRLLYNGSGQ.

The N-terminal stretch at 1–19 is a signal peptide; the sequence is MLFLKAVIAILSVLPAADA. The propeptide occupies 20–116; that stretch reads AAILNFENKQ…IEPDRMASAQ (97 aa). One can recognise an Inhibitor I9 domain in the interval 35–112; that stretch reads SYIVVLKNDI…QVDYIEPDRM (78 aa). The region spanning 126-401 is the Peptidase S8 domain; that stretch reads SWGLGRISHQ…NRLLYNGSGQ (276 aa). Active-site charge relay system residues include Asp158 and His189. N-linked (GlcNAc...) asparagine glycosylation is present at Asn250. Ser347 functions as the Charge relay system in the catalytic mechanism. The N-linked (GlcNAc...) asparagine glycan is linked to Asn397.

The protein belongs to the peptidase S8 family.

It is found in the secreted. Secreted subtilisin-like serine protease with keratinolytic activity that contributes to pathogenicity. The polypeptide is Subtilisin-like protease 10 (SUB10) (Arthroderma otae (strain ATCC MYA-4605 / CBS 113480) (Microsporum canis)).